The chain runs to 501 residues: Lysine--tRNA ligase (501 aa).

Positions 411 and 418 each coordinate Mg(2+).

It belongs to the class-II aminoacyl-tRNA synthetase family. As to quaternary structure, homodimer. Requires Mg(2+) as cofactor.

The protein resides in the cytoplasm. The enzyme catalyses tRNA(Lys) + L-lysine + ATP = L-lysyl-tRNA(Lys) + AMP + diphosphate. This Clostridium perfringens (strain SM101 / Type A) protein is Lysine--tRNA ligase.